The chain runs to 185 residues: Ribosome-recycling factor (185 aa).

It belongs to the RRF family.

It is found in the cytoplasm. Its function is as follows. Responsible for the release of ribosomes from messenger RNA at the termination of protein biosynthesis. May increase the efficiency of translation by recycling ribosomes from one round of translation to another. In Streptococcus pneumoniae (strain 70585), this protein is Ribosome-recycling factor.